We begin with the raw amino-acid sequence, 65 residues long: Small ribosomal subunit protein eS27 (65 aa).

4 residues coordinate Zn(2+): Cys-20, Cys-23, Cys-39, and Cys-42. The segment at 20 to 42 adopts a C4-type zinc-finger fold; that stretch reads CIDCGNEQIVFSNPATTVRCLVC.

It belongs to the eukaryotic ribosomal protein eS27 family. As to quaternary structure, part of the 30S ribosomal subunit. Requires Zn(2+) as cofactor.

This chain is Small ribosomal subunit protein eS27, found in Thermococcus onnurineus (strain NA1).